The sequence spans 517 residues: Crotonobetaine/carnitine--CoA ligase (517 aa).

The protein belongs to the ATP-dependent AMP-binding enzyme family.

It carries out the reaction 4-(trimethylamino)butanoate + ATP + CoA = 4-(trimethylamino)butanoyl-CoA + AMP + diphosphate. The enzyme catalyses crotonobetaine + ATP + CoA = crotonobetainyl-CoA + AMP + diphosphate. It catalyses the reaction (R)-carnitine + ATP + CoA = (R)-carnitinyl-CoA + AMP + diphosphate. It participates in amine and polyamine metabolism; carnitine metabolism. In terms of biological role, catalyzes the transfer of CoA to carnitine, generating the initial carnitinyl-CoA needed for the CaiB reaction cycle. Also has activity toward crotonobetaine and gamma-butyrobetaine. The chain is Crotonobetaine/carnitine--CoA ligase from Escherichia coli O1:K1 / APEC.